The sequence spans 183 residues: uncharacterized protein (183 aa).

The segment at 1–36 (MAKRGNKKKQEAPLSLGKHTVGGRVGKPTNAKTGSA) is disordered. Residues 100–174 (TNVVIENLAP…FKLSCYIKKN (75 aa)) enclose the RRM domain.

The protein localises to the nucleus. The protein resides in the nucleolus. This is an uncharacterized protein from Schizosaccharomyces pombe (strain 972 / ATCC 24843) (Fission yeast).